We begin with the raw amino-acid sequence, 76 residues long: RNA-binding protein KhpA (76 aa).

A KH domain is found at 29 to 76 (QNIIELRVSPKDVGKVIGKNGRIAKSLRAILTAASVKAGKNFSLEIID).

This sequence belongs to the KhpA RNA-binding protein family. Forms a complex with KhpB.

The protein resides in the cytoplasm. A probable RNA chaperone. Forms a complex with KhpB which binds to cellular RNA and controls its expression. Plays a role in peptidoglycan (PG) homeostasis and cell length regulation. In Leptospira interrogans serogroup Icterohaemorrhagiae serovar copenhageni (strain Fiocruz L1-130), this protein is RNA-binding protein KhpA.